The primary structure comprises 791 residues: KN motif and ankyrin repeat domain-containing protein 3 (791 aa).

5 disordered regions span residues 1–37 (MAKFVLNQNLPDLGGPPLYPGPTGSARSPSSPYSVET), 56–181 (RGPA…GPAQ), 254–312 (ATSD…ETRE), 401–425 (GCTEKTTQTELPVENQPRPTAGDEM), and 463–514 (YESS…GDCE). Polar residues predominate over residues 25-34 (SARSPSSPYS). Residues 105–125 (LSPGAFPGLSLPPLSPRSLSR) show a composition bias toward low complexity. Basic and acidic residues predominate over residues 127-149 (PRVEHTLLETSRRLEQAQARERA). Phosphoserine occurs at positions 151, 159, 163, 166, 167, and 176. Residues 158 to 180 (RSPRGSGRSSPAPNPALASPGPA) are compositionally biased toward low complexity. Residues 180 to 229 (AQLQLVREQMAAALRRLRELEDQARALPELQEQVRALRAEKARLLAGRVQ) adopt a coiled-coil conformation. Basic and acidic residues-rich tracts occupy residues 254 to 280 (ATSDRGVRSRASPRAEDPDGLAARRSE) and 293 to 312 (PDGEPRTRETGTEVVPETRE). Ser279 carries the phosphoserine modification. Polar residues predominate over residues 401–410 (GCTEKTTQTE). The span at 485–496 (SSSSGSDDSSGG) shows a compositional bias: low complexity. Residues 505-514 (HNDKDAGDCE) show a composition bias toward basic and acidic residues. 5 ANK repeats span residues 606-636 (NGNTALHYSVSHGNLAISSLLLDTGVCDVNH), 640-677 (AGYSALMLAALTSVGQEEEDMAVAQRLFSMGDVNAKAS), 679-708 (TGQTALMLAISHGHQDMVAALLECGADVNV), 712-742 (DGATALMCASEYGRLDTVQLLLAQPGCDLTI), and 746-775 (EGTSALAIALEAEQDEVAALLHAHLTSNHQ). The segment covering 772 to 783 (SNHQGQSSTGSP) has biased composition (polar residues). The segment at 772-791 (SNHQGQSSTGSPTAKECNDK) is disordered.

May be involved in the control of cytoskeleton formation by regulating actin polymerization. This Mus musculus (Mouse) protein is KN motif and ankyrin repeat domain-containing protein 3.